Here is a 394-residue protein sequence, read N- to C-terminus: Phosphoglycerate kinase (394 aa).

Substrate-binding positions include 21 to 23, Arg36, 59 to 62, Arg118, and Arg151; these read DFN and HLGR. A Phosphoserine modification is found at Ser183. ATP is bound by residues Lys201 and Gly292. Thr299 bears the Phosphothreonine mark. ATP contacts are provided by residues Glu323 and 350-353; that span reads GGDS.

It belongs to the phosphoglycerate kinase family. Monomer.

The protein resides in the cytoplasm. The catalysed reaction is (2R)-3-phosphoglycerate + ATP = (2R)-3-phospho-glyceroyl phosphate + ADP. It functions in the pathway carbohydrate degradation; glycolysis; pyruvate from D-glyceraldehyde 3-phosphate: step 2/5. The polypeptide is Phosphoglycerate kinase (pgk) (Priestia megaterium (strain DSM 319 / IMG 1521) (Bacillus megaterium)).